The chain runs to 448 residues: Pentatricopeptide repeat-containing protein At1g80550, mitochondrial (448 aa).

The transit peptide at Met-1–Leu-21 directs the protein to the mitochondrion. 10 PPR repeats span residues Thr-80 to Asn-110, Asn-116 to Phe-146, Asp-150 to Val-186, Asn-188 to Lys-222, Asp-223 to Leu-257, Asp-258 to Pro-292, Asn-293 to Pro-327, Thr-331 to Pro-359, Lys-360 to Pro-394, and Asp-395 to Pro-429.

It belongs to the PPR family. P subfamily.

It localises to the mitochondrion. This is Pentatricopeptide repeat-containing protein At1g80550, mitochondrial from Arabidopsis thaliana (Mouse-ear cress).